The chain runs to 454 residues: MHWVFHCILIILACLRFTCADTPANCTYEDAHGRWKFHIGDYQSKCPEKLNSKQSVVISLLYPDIAIDEFGNRGHWTLIYNQGFEVTINHRKWLVIFAYKSNGEFNCHKSMPMWTHDTLIDSGSVCSGKIGVHDKFHINKLFGSKSFGRTLYHINPSFVGKINAHQKSWRGEIYPELSKYTIDELRNRAGGVKSMVTRPSVLNRKTPSKELISLTGNLPLEFDWTSPPDGSRSPVTPIRNQGICGSCYASPSAAALEARIRLVSNFSEQPILSPQTVVDCSPYSEGCNGGFPFLIAGKYGEDFGLPQKIVIPYTGEDTGKCTVSKNCTRYYTTDYSYIGGYYGATNEKLMQLELISNGPFPVGFEVYEDFQFYKEGIYHHTTVQTDHYNFNPFELTNHAVLLVGYGVDKLSGEPYWKVKNSWGVEWGEQGYFRILRGTDECGVESLGVRFDPVL.

Residues 1–20 form the signal peptide; that stretch reads MHWVFHCILIILACLRFTCA. Residues 21–217 constitute a propeptide that is removed on maturation; sequence DTPANCTYED…SKELISLTGN (197 aa). Asn-25 is a glycosylation site (N-linked (GlcNAc...) asparagine). Disulfide bonds link Cys-26–Cys-107, Cys-244–Cys-287, and Cys-280–Cys-321. Cys-247 is a catalytic residue. Asn-265 is a glycosylation site (N-linked (GlcNAc...) asparagine). Phe-291 lines the chloride pocket. Asn-326 is a glycosylation site (N-linked (GlcNAc...) asparagine). Residue Tyr-337 participates in chloride binding. Active-site residues include His-398 and Asn-420.

Belongs to the peptidase C1 family. Chloride serves as cofactor.

The protein localises to the lysosome. In terms of biological role, thiol protease. Has a role as a digestive enzyme. The sequence is that of Cathepsin C from Schistosoma mansoni (Blood fluke).